The primary structure comprises 47 residues: Glyceraldehyde-3-phosphate dehydrogenase, cytosolic (47 aa).

This sequence belongs to the glyceraldehyde-3-phosphate dehydrogenase family. Homotetramer.

The protein localises to the cytoplasm. It carries out the reaction D-glyceraldehyde 3-phosphate + phosphate + NAD(+) = (2R)-3-phospho-glyceroyl phosphate + NADH + H(+). Its pathway is carbohydrate degradation; glycolysis; pyruvate from D-glyceraldehyde 3-phosphate: step 1/5. This chain is Glyceraldehyde-3-phosphate dehydrogenase, cytosolic, found in Pseudotsuga menziesii (Douglas-fir).